Reading from the N-terminus, the 383-residue chain is F-box/kelch-repeat protein At2g29830 (383 aa).

Residues 1–21 are disordered; it reads MVVLSEIPGDPNEDNQNENPQ. Positions 11–21 are enriched in acidic residues; the sequence is PNEDNQNENPQ. In terms of domain architecture, F-box spans 27–73; the sequence is LPILLQLPEELIASIVALIPRCHYPSLSLVSRAFRHLITSQELYVAR. Kelch repeat units lie at residues 130–178, 179–224, 226–272, 274–317, and 324–370; these read KMYV…IIDG, RIYV…FITY, VMQG…VVGD, LYAL…YTST, and KLVI…RDLP.

This chain is F-box/kelch-repeat protein At2g29830, found in Arabidopsis thaliana (Mouse-ear cress).